The sequence spans 442 residues: tRNA modification GTPase MnmE (442 aa).

(6S)-5-formyl-5,6,7,8-tetrahydrofolate-binding residues include arginine 27, glutamate 84, and lysine 124. A TrmE-type G domain is found at 221 to 366 (GLHVVIVGAP…LLDALQAFAE (146 aa)). GTP contacts are provided by residues 231–236 (NAGKSS), 250–256 (SKEAGTT), and 275–278 (DTAG). Residues serine 235 and threonine 256 each contribute to the Mg(2+) site. (6S)-5-formyl-5,6,7,8-tetrahydrofolate is bound at residue lysine 442.

Belongs to the TRAFAC class TrmE-Era-EngA-EngB-Septin-like GTPase superfamily. TrmE GTPase family. In terms of assembly, homodimer. Heterotetramer of two MnmE and two MnmG subunits. It depends on K(+) as a cofactor.

It localises to the cytoplasm. Exhibits a very high intrinsic GTPase hydrolysis rate. Involved in the addition of a carboxymethylaminomethyl (cmnm) group at the wobble position (U34) of certain tRNAs, forming tRNA-cmnm(5)s(2)U34. In Brucella canis (strain ATCC 23365 / NCTC 10854 / RM-666), this protein is tRNA modification GTPase MnmE.